A 672-amino-acid chain; its full sequence is UvrABC system protein B (672 aa).

A Helicase ATP-binding domain is found at 26 to 181 (AGLEDGLAYQ…ILQRLAELQY (156 aa)). 39–46 (GVTGSGKT) provides a ligand contact to ATP. A Beta-hairpin motif is present at residues 92-115 (YYDYYQPEAYVPSSDTYIEKDASI). One can recognise a Helicase C-terminal domain in the interval 430 to 592 (QVDDLLSEIK…ITPKSIQKAV (163 aa)). The UVR domain occupies 631–666 (AKELRKLEEQMYHHARNLEFEEAAAVRDKIQHIRKG).

Belongs to the UvrB family. In terms of assembly, forms a heterotetramer with UvrA during the search for lesions. Interacts with UvrC in an incision complex.

It localises to the cytoplasm. The UvrABC repair system catalyzes the recognition and processing of DNA lesions. A damage recognition complex composed of 2 UvrA and 2 UvrB subunits scans DNA for abnormalities. Upon binding of the UvrA(2)B(2) complex to a putative damaged site, the DNA wraps around one UvrB monomer. DNA wrap is dependent on ATP binding by UvrB and probably causes local melting of the DNA helix, facilitating insertion of UvrB beta-hairpin between the DNA strands. Then UvrB probes one DNA strand for the presence of a lesion. If a lesion is found the UvrA subunits dissociate and the UvrB-DNA preincision complex is formed. This complex is subsequently bound by UvrC and the second UvrB is released. If no lesion is found, the DNA wraps around the other UvrB subunit that will check the other stand for damage. The polypeptide is UvrABC system protein B (Coxiella burnetii (strain Dugway 5J108-111)).